We begin with the raw amino-acid sequence, 415 residues long: Pectin acetylesterase 12 (415 aa).

The signal sequence occupies residues 1–20 (MVKLLLVGFVVAGIILGTQA). An N-linked (GlcNAc...) asparagine glycan is attached at asparagine 27. Catalysis depends on charge relay system residues serine 197, aspartate 293, and histidine 360.

The protein belongs to the pectinacetylesterase family.

It is found in the secreted. The protein localises to the cell wall. Hydrolyzes acetyl esters in homogalacturonan regions of pectin. In type I primary cell wall, galacturonic acid residues of pectin can be acetylated at the O-2 and O-3 positions. Decreasing the degree of acetylation of pectin gels in vitro alters their physical properties. The polypeptide is Pectin acetylesterase 12 (Arabidopsis thaliana (Mouse-ear cress)).